The primary structure comprises 355 residues: Isopentenyl-diphosphate delta-isomerase (355 aa).

A substrate-binding site is contributed by 6–7; it reads RK. FMN-binding positions include 62–64, S93, and N122; that span reads AMT. Q152 contacts substrate. E153 is a Mg(2+) binding site. FMN-binding positions include K184, T214, 258–259, and 280–281; these read GG and AG.

Belongs to the IPP isomerase type 2 family. Homooctamer. Dimer of tetramers. It depends on FMN as a cofactor. NADPH is required as a cofactor. Mg(2+) serves as cofactor.

Its subcellular location is the cytoplasm. The catalysed reaction is isopentenyl diphosphate = dimethylallyl diphosphate. Its function is as follows. Involved in the biosynthesis of isoprenoids. Catalyzes the 1,3-allylic rearrangement of the homoallylic substrate isopentenyl (IPP) to its allylic isomer, dimethylallyl diphosphate (DMAPP). The polypeptide is Isopentenyl-diphosphate delta-isomerase (Bacillus pumilus (strain SAFR-032)).